The following is a 355-amino-acid chain: Protein RecA (355 aa).

65-72 (GPESSGKT) is an ATP binding site.

The protein belongs to the RecA family.

The protein resides in the cytoplasm. In terms of biological role, can catalyze the hydrolysis of ATP in the presence of single-stranded DNA, the ATP-dependent uptake of single-stranded DNA by duplex DNA, and the ATP-dependent hybridization of homologous single-stranded DNAs. It interacts with LexA causing its activation and leading to its autocatalytic cleavage. The chain is Protein RecA from Pseudomonas putida (strain GB-1).